Reading from the N-terminus, the 541-residue chain is Malate synthase (541 aa).

Arg-169 (proton acceptor) is an active-site residue. Asp-454 serves as the catalytic Proton donor.

Belongs to the malate synthase family.

The protein localises to the cytoplasm. It catalyses the reaction glyoxylate + acetyl-CoA + H2O = (S)-malate + CoA + H(+). It participates in carbohydrate metabolism; glyoxylate cycle; (S)-malate from isocitrate: step 2/2. In Streptomyces clavuligerus, this protein is Malate synthase (aceB).